The chain runs to 190 residues: Elongation factor P-like protein (190 aa).

The protein belongs to the elongation factor P family.

The sequence is that of Elongation factor P-like protein from Pseudoalteromonas atlantica (strain T6c / ATCC BAA-1087).